Here is a 477-residue protein sequence, read N- to C-terminus: Glycogen synthase (477 aa).

Lys15 lines the ADP-alpha-D-glucose pocket.

This sequence belongs to the glycosyltransferase 1 family. Bacterial/plant glycogen synthase subfamily.

It catalyses the reaction [(1-&gt;4)-alpha-D-glucosyl](n) + ADP-alpha-D-glucose = [(1-&gt;4)-alpha-D-glucosyl](n+1) + ADP + H(+). It functions in the pathway glycan biosynthesis; glycogen biosynthesis. Functionally, synthesizes alpha-1,4-glucan chains using ADP-glucose. The sequence is that of Glycogen synthase from Salmonella choleraesuis (strain SC-B67).